The primary structure comprises 894 residues: Eukaryotic translation initiation factor 3 subunit C (894 aa).

Disordered regions lie at residues 1–28 (MSRFYRRGASDSDTDSSEDEVEELKANK) and 162–235 (SDYR…VTKM). 3 stretches are compositionally biased toward acidic residues: residues 12–22 (SDTDSSEDEVE), 169–189 (DEDGYETPEDENDEDDFEEVP), and 203–214 (SESESDSDDDDS). The segment covering 215-224 (FNWSSEPDTN) has biased composition (polar residues). The PCI domain occupies 625 to 801 (YHMHINVELM…DCLIMHRVEP (177 aa)). A disordered region spans residues 824-894 (QILEPRTGRG…RRHPQKPRAF (71 aa)). The segment covering 845-854 (RNERQGDKQK) has biased composition (basic and acidic residues). Gly residues predominate over residues 855-870 (GSGGFQGERRGGPGGP). Over residues 884–894 (QRRHPQKPRAF) the composition is skewed to basic residues.

The protein belongs to the eIF-3 subunit C family. Component of the eukaryotic translation initiation factor 3 (eIF-3) complex.

It localises to the cytoplasm. Component of the eukaryotic translation initiation factor 3 (eIF-3) complex, which is involved in protein synthesis of a specialized repertoire of mRNAs and, together with other initiation factors, stimulates binding of mRNA and methionyl-tRNAi to the 40S ribosome. The eIF-3 complex specifically targets and initiates translation of a subset of mRNAs involved in cell proliferation. The protein is Eukaryotic translation initiation factor 3 subunit C of Caenorhabditis briggsae.